The chain runs to 492 residues: N-succinylglutamate 5-semialdehyde dehydrogenase (492 aa).

220 to 225 (GSANTG) contributes to the NAD(+) binding site. Residues Glu243 and Cys277 contribute to the active site.

Belongs to the aldehyde dehydrogenase family. AstD subfamily.

It carries out the reaction N-succinyl-L-glutamate 5-semialdehyde + NAD(+) + H2O = N-succinyl-L-glutamate + NADH + 2 H(+). Its pathway is amino-acid degradation; L-arginine degradation via AST pathway; L-glutamate and succinate from L-arginine: step 4/5. Its function is as follows. Catalyzes the NAD-dependent reduction of succinylglutamate semialdehyde into succinylglutamate. The polypeptide is N-succinylglutamate 5-semialdehyde dehydrogenase (Escherichia coli O7:K1 (strain IAI39 / ExPEC)).